A 154-amino-acid polypeptide reads, in one-letter code: Transcriptional repressor NrdR (154 aa).

A zinc finger lies at 3-34; that stretch reads CPTCKYNGTRVVDSRPADDGNSIRRRRECEKC. The ATP-cone domain maps to 49–139; the sequence is LIVVKKDGAR…VYRQFKDISV (91 aa).

Belongs to the NrdR family. Zn(2+) serves as cofactor.

Its function is as follows. Negatively regulates transcription of bacterial ribonucleotide reductase nrd genes and operons by binding to NrdR-boxes. In Listeria welshimeri serovar 6b (strain ATCC 35897 / DSM 20650 / CCUG 15529 / CIP 8149 / NCTC 11857 / SLCC 5334 / V8), this protein is Transcriptional repressor NrdR.